The primary structure comprises 383 residues: 1-deoxy-D-xylulose 5-phosphate reductoisomerase (383 aa).

NADPH-binding residues include T10, G11, S12, I13, N38, and N121. Position 122 (K122) interacts with 1-deoxy-D-xylulose 5-phosphate. E123 lines the NADPH pocket. D147 is a Mn(2+) binding site. 1-deoxy-D-xylulose 5-phosphate contacts are provided by S148, E149, S172, and H195. A Mn(2+)-binding site is contributed by E149. G201 contributes to the NADPH binding site. 1-deoxy-D-xylulose 5-phosphate-binding residues include S208, N213, K214, and E217. E217 contributes to the Mn(2+) binding site.

It belongs to the DXR family. Mg(2+) serves as cofactor. It depends on Mn(2+) as a cofactor.

It carries out the reaction 2-C-methyl-D-erythritol 4-phosphate + NADP(+) = 1-deoxy-D-xylulose 5-phosphate + NADPH + H(+). It functions in the pathway isoprenoid biosynthesis; isopentenyl diphosphate biosynthesis via DXP pathway; isopentenyl diphosphate from 1-deoxy-D-xylulose 5-phosphate: step 1/6. Functionally, catalyzes the NADPH-dependent rearrangement and reduction of 1-deoxy-D-xylulose-5-phosphate (DXP) to 2-C-methyl-D-erythritol 4-phosphate (MEP). This is 1-deoxy-D-xylulose 5-phosphate reductoisomerase from Vesicomyosocius okutanii subsp. Calyptogena okutanii (strain HA).